Consider the following 84-residue polypeptide: UPF0473 protein CKL_1327 (84 aa).

Belongs to the UPF0473 family.

The chain is UPF0473 protein CKL_1327 from Clostridium kluyveri (strain ATCC 8527 / DSM 555 / NBRC 12016 / NCIMB 10680 / K1).